Here is a 183-residue protein sequence, read N- to C-terminus: Threonylcarbamoyl-AMP synthase (183 aa).

The 183-residue stretch at M1–G183 folds into the YrdC-like domain.

The protein belongs to the SUA5 family. TsaC subfamily.

The protein localises to the cytoplasm. The catalysed reaction is L-threonine + hydrogencarbonate + ATP = L-threonylcarbamoyladenylate + diphosphate + H2O. In terms of biological role, required for the formation of a threonylcarbamoyl group on adenosine at position 37 (t(6)A37) in tRNAs that read codons beginning with adenine. Catalyzes the conversion of L-threonine, HCO(3)(-)/CO(2) and ATP to give threonylcarbamoyl-AMP (TC-AMP) as the acyladenylate intermediate, with the release of diphosphate. This is Threonylcarbamoyl-AMP synthase from Pasteurella multocida (strain Pm70).